We begin with the raw amino-acid sequence, 328 residues long: Phenylalanine--tRNA ligase alpha subunit (328 aa).

Position 253 (Glu-253) interacts with Mg(2+).

It belongs to the class-II aminoacyl-tRNA synthetase family. Phe-tRNA synthetase alpha subunit type 1 subfamily. As to quaternary structure, tetramer of two alpha and two beta subunits. Mg(2+) is required as a cofactor.

It localises to the cytoplasm. It catalyses the reaction tRNA(Phe) + L-phenylalanine + ATP = L-phenylalanyl-tRNA(Phe) + AMP + diphosphate + H(+). This chain is Phenylalanine--tRNA ligase alpha subunit, found in Actinobacillus pleuropneumoniae serotype 7 (strain AP76).